Consider the following 222-residue polypeptide: MNKMNQLVRFVKDTVAVRKPQSEDKSYLPIPSTIGGHEVNSPFAEPTAPSLGIIQPKCKRADWLIKSHLTITTNYEIKEWETWDRAISDILDLYDGNPVFKPILLFVYYVLAYNARKIPGPSNGVRYGAYFDELTTVWHAIPELMNQEIDYSYNHRVLHRKIQYVISFKIQMSSTKRRTSPIESFIEVTSEGLKHTPQFTTILDRARFVYSLTGGRYVIHPF.

A PTAP/PSAP motif motif is present at residues 46–49 (PTAP).

Homomultimer. Interacts with viral nucleocapsid. Interacts with host TSG101.

It is found in the virion membrane. It localises to the host endomembrane system. Its subcellular location is the host nucleus membrane. In terms of biological role, plays a major role in assembly and budding of virion, by recruiting cellular partners of the ESCRT complexes that play a key role in releasing the budding particle from the host membrane. Condensates the ribonucleocapsid core during virus assembly. The sequence is that of Matrix protein (M) from Drosophila melanogaster (Fruit fly).